Here is a 604-residue protein sequence, read N- to C-terminus: Proline--tRNA ligase (604 aa).

It belongs to the class-II aminoacyl-tRNA synthetase family. ProS type 1 subfamily. As to quaternary structure, homodimer.

The protein localises to the cytoplasm. The catalysed reaction is tRNA(Pro) + L-proline + ATP = L-prolyl-tRNA(Pro) + AMP + diphosphate. In terms of biological role, catalyzes the attachment of proline to tRNA(Pro) in a two-step reaction: proline is first activated by ATP to form Pro-AMP and then transferred to the acceptor end of tRNA(Pro). As ProRS can inadvertently accommodate and process non-cognate amino acids such as alanine and cysteine, to avoid such errors it has two additional distinct editing activities against alanine. One activity is designated as 'pretransfer' editing and involves the tRNA(Pro)-independent hydrolysis of activated Ala-AMP. The other activity is designated 'posttransfer' editing and involves deacylation of mischarged Ala-tRNA(Pro). The misacylated Cys-tRNA(Pro) is not edited by ProRS. In Trichormus variabilis (strain ATCC 29413 / PCC 7937) (Anabaena variabilis), this protein is Proline--tRNA ligase.